The primary structure comprises 342 residues: Alpha-(1,3)-fucosyltransferase 7 (342 aa).

The Cytoplasmic portion of the chain corresponds to Met-1–Ser-11. Residues Leu-12–Trp-31 form a helical; Signal-anchor for type II membrane protein membrane-spanning segment. At Arg-32–Ala-342 the chain is on the extracellular side. A disulfide bond links Cys-68 and Cys-76. An N-linked (GlcNAc...) asparagine glycan is attached at Asn-81. Cys-211 and Cys-214 are joined by a disulfide. Asn-291 carries an N-linked (GlcNAc...) asparagine glycan. A disulfide bridge connects residues Cys-318 and Cys-321.

It belongs to the glycosyltransferase 10 family. Post-translationally, N-glycosylated. As to expression, expressed in thymus, spleen, liver and lung. Highly expressed in the thymus and lower expressed in the lung.

The protein resides in the membrane. It carries out the reaction an N-acetyl-alpha-neuraminyl-(2-&gt;3)-beta-D-galactosyl-(1-&gt;4)-N-acetyl-beta-D-glucosaminyl derivative + GDP-beta-L-fucose = an alpha-Neu5Ac-(2-&gt;3)-beta-D-Gal-(1-&gt;4)-[alpha-L-Fuc-(1-&gt;3)]-beta-D-GlcNAc derivative + GDP + H(+). The catalysed reaction is a neolactoside IV(3)-alpha-NeuAc-nLc4Cer + GDP-beta-L-fucose = a neolactoside IV(3)-alpha-NeuNAc,III(3)-alpha-Fuc-nLc4Cer + GDP + H(+). The enzyme catalyses a neolactoside VI(3)-alpha-NeuNAc-nLc6Cer + GDP-beta-L-fucose = a neolactoside VI(3)-alpha-NeuAc,V(3)-alphaFuc-nLc6Cer + GDP + H(+). It catalyses the reaction an alpha-Neu5Ac-(2-&gt;3)-beta-D-Gal-(1-&gt;4)-beta-D-GlcNAc-(1-&gt;3)-beta-D-Gal-(1-&gt;4)-[alpha-L-Fuc-(1-&gt;3)]-beta-D-GlcNAc derivative + GDP-beta-L-fucose = an alpha-Neu5Ac-(2-&gt;3)-beta-D-Gal-(1-&gt;4)-[alpha-L-Fuc-(1-&gt;3)]-beta-D-GlcNAc-(1-&gt;3)-beta-D-Gal-(1-&gt;4)-[alpha-L-Fuc-(1-&gt;3)]-beta-D-GlcNAc derivative + GDP + H(+). It carries out the reaction an alpha-Neu5Ac-(2-&gt;3)-beta-D-Gal-(1-&gt;4)-beta-D-GlcNAc6S derivative + GDP-beta-L-fucose = an alpha-Neu5Ac-(2-&gt;3)-beta-D-Gal-(1-&gt;4)-[alpha-L-Fuc-(1-&gt;3)]-beta-D-GlcNAc6S derivative + GDP + H(+). The catalysed reaction is alpha-Neu5Ac-(2-&gt;3)-beta-D-Gal-(1-&gt;4)-beta-D-GlcNAc-(1-&gt;3)-beta-D-Gal-(1-&gt;4)-D-Glc + GDP-beta-L-fucose = alpha-Neu5Ac-(2-&gt;3)-beta-D-Gal-(1-&gt;4)-[alpha-L-Fuc-(1-&gt;3)]-beta-D-GlcNAc-(1-&gt;3)-beta-D-Gal-(1-&gt;4)-D-Glc + GDP + H(+). The enzyme catalyses alpha-Neu5Ac-(2-&gt;3)-beta-D-Gal-(1-&gt;4)-beta-D-GlcNAc-(1-&gt;3)-beta-D-Gal-(1-&gt;4)-[alpha-L-Fuc-(1-&gt;3)]-beta-D-GlcNAc-(1-&gt;3)-beta-D-Gal-(1-&gt;4)-beta-D-GlcNAc + GDP-beta-L-fucose = alpha-Neu5Ac-(2-&gt;3)-beta-D-Gal-(1-&gt;4)-[alpha-L-Fuc-(1-&gt;3)]-beta-D-GlcNAc-(1-&gt;3)-beta-D-Gal-(1-&gt;4)-[alpha-L-Fuc-(1-&gt;3)]-beta-D-GlcNAc-(1-&gt;3)-beta-D-Gal-(1-&gt;4)-beta-D-GlcNAc + GDP + H(+). It catalyses the reaction alpha-Neu5Ac-(2-&gt;3)-beta-D-Gal-(1-&gt;4)-beta-D-GlcNAc-(1-&gt;3)-beta-D-Gal-(1-&gt;4)-beta-D-GlcNAc-(1-&gt;3)-beta-D-Gal-(1-&gt;4)-beta-D-GlcNAc + GDP-beta-L-fucose = alpha-Neu5Ac-(2-&gt;3)-beta-D-Gal-(1-&gt;4)-[alpha-L-Fuc-(1-&gt;3)]-beta-D-GlcNAc-(1-&gt;3)-beta-D-Gal-(1-&gt;4)-beta-D-GlcNAc-(1-&gt;3)-beta-D-Gal-(1-&gt;4)-beta-D-GlcNAc + GDP + H(+). The protein operates within protein modification; protein glycosylation. Its activity is regulated as follows. Inhibited by NaCl. Inhibited by GDP in a concentration dependent manner, with an IC(50) value of 93 uM. Also inhibited by GMP and GTP. Inhibited by N-ethylmaleimide. Activated by poly(ethylene glycol) by enhancing the thermal stability of FUT7. Activated by Mn2+, Ca2+, and Mg2+. Both panosialin A and B inhibit activity with IC(50) values of 4.8 and 5.3 ug/ml, respectively. Inhibited by gallic acid (GA) and (-)-epigallocatechin gallate (EGCG) in a time-dependent and irreversible manner with IC(50) values of 60 and 700 nM, respectively. Functionally, catalyzes the transfer of L-fucose, from a guanosine diphosphate-beta-L-fucose, to the N-acetyl glucosamine (GlcNAc) of a distal alpha2,3 sialylated lactosamine unit of a glycoprotein or a glycolipid-linked sialopolylactosamines chain through an alpha-1,3 glycosidic linkage and participates in the final fucosylation step in the biosynthesis of the sialyl Lewis X (sLe(x)), a carbohydrate involved in cell and matrix adhesion during leukocyte trafficking and fertilization. In vitro, also synthesizes sialyl-dimeric-Lex structures, from VIM-2 structures and both di-fucosylated and trifucosylated structures from mono-fucosylated precursors. However does not catalyze alpha 1-3 fucosylation when an internal alpha 1-3 fucosylation is present in polylactosamine chain and the fucosylation rate of the internal GlcNAc residues is reduced once fucose has been added to the distal GlcNAc. Also catalyzes the transfer of a fucose from GDP-beta-fucose to the 6-sulfated a(2,3)sialylated substrate to produce 6-sulfo sLex mediating significant L-selectin-dependent cell adhesion. Through sialyl-Lewis(x) biosynthesis, can control SELE- and SELP-mediated cell adhesion with leukocytes and allows leukocytes tethering and rolling along the endothelial tissue thereby enabling the leukocytes to accumulate at a site of inflammation. May enhance embryo implantation through sialyl Lewis X (sLeX)-mediated adhesion of embryo cells to endometrium. May affect insulin signaling by up-regulating the phosphorylation and expression of some signaling molecules involved in the insulin-signaling pathway through SLe(x) which is present on the glycans of the INSRR alpha subunit. This is Alpha-(1,3)-fucosyltransferase 7 from Bos taurus (Bovine).